Here is a 368-residue protein sequence, read N- to C-terminus: 1-deoxy-D-xylulose 5-phosphate reductoisomerase (368 aa).

The NADPH site is built by Thr7, Gly8, Ser9, Ile10, Gly31, Lys32, Asn33, and Asn113. A 1-deoxy-D-xylulose 5-phosphate-binding site is contributed by Lys114. Glu115 is an NADPH binding site. Position 133 (Asp133) interacts with Mn(2+). 1-deoxy-D-xylulose 5-phosphate is bound by residues Ser134, Glu135, Ser158, and His181. Glu135 is a binding site for Mn(2+). Position 187 (Gly187) interacts with NADPH. 1-deoxy-D-xylulose 5-phosphate contacts are provided by Ser194, Asn199, Lys200, and Glu203. Glu203 is a Mn(2+) binding site.

This sequence belongs to the DXR family. Requires Mg(2+) as cofactor. It depends on Mn(2+) as a cofactor.

It carries out the reaction 2-C-methyl-D-erythritol 4-phosphate + NADP(+) = 1-deoxy-D-xylulose 5-phosphate + NADPH + H(+). Its pathway is isoprenoid biosynthesis; isopentenyl diphosphate biosynthesis via DXP pathway; isopentenyl diphosphate from 1-deoxy-D-xylulose 5-phosphate: step 1/6. In terms of biological role, catalyzes the NADPH-dependent rearrangement and reduction of 1-deoxy-D-xylulose-5-phosphate (DXP) to 2-C-methyl-D-erythritol 4-phosphate (MEP). The protein is 1-deoxy-D-xylulose 5-phosphate reductoisomerase of Helicobacter pylori (strain J99 / ATCC 700824) (Campylobacter pylori J99).